The chain runs to 346 residues: Biotin synthase (346 aa).

A Radical SAM core domain is found at 38-256 (RQVQVSTLLS…IAVARIMMPT (219 aa)). [4Fe-4S] cluster-binding residues include Cys53, Cys57, and Cys60. [2Fe-2S] cluster contacts are provided by Cys97, Cys128, Cys188, and Arg260.

Belongs to the radical SAM superfamily. Biotin synthase family. In terms of assembly, homodimer. The cofactor is [4Fe-4S] cluster. Requires [2Fe-2S] cluster as cofactor.

The enzyme catalyses (4R,5S)-dethiobiotin + (sulfur carrier)-SH + 2 reduced [2Fe-2S]-[ferredoxin] + 2 S-adenosyl-L-methionine = (sulfur carrier)-H + biotin + 2 5'-deoxyadenosine + 2 L-methionine + 2 oxidized [2Fe-2S]-[ferredoxin]. It participates in cofactor biosynthesis; biotin biosynthesis; biotin from 7,8-diaminononanoate: step 2/2. Catalyzes the conversion of dethiobiotin (DTB) to biotin by the insertion of a sulfur atom into dethiobiotin via a radical-based mechanism. This chain is Biotin synthase, found in Shigella boydii serotype 18 (strain CDC 3083-94 / BS512).